The chain runs to 268 residues: Tryptophan synthase alpha chain (268 aa).

Active-site proton acceptor residues include Glu49 and Asp60.

It belongs to the TrpA family. In terms of assembly, tetramer of two alpha and two beta chains.

It carries out the reaction (1S,2R)-1-C-(indol-3-yl)glycerol 3-phosphate + L-serine = D-glyceraldehyde 3-phosphate + L-tryptophan + H2O. Its pathway is amino-acid biosynthesis; L-tryptophan biosynthesis; L-tryptophan from chorismate: step 5/5. Functionally, the alpha subunit is responsible for the aldol cleavage of indoleglycerol phosphate to indole and glyceraldehyde 3-phosphate. This is Tryptophan synthase alpha chain from Shigella flexneri serotype 5b (strain 8401).